Here is a 284-residue protein sequence, read N- to C-terminus: Bifunctional protein FolD (284 aa).

NADP(+) contacts are provided by residues 165-167, serine 190, and valine 231; that span reads GRS.

The protein belongs to the tetrahydrofolate dehydrogenase/cyclohydrolase family. As to quaternary structure, homodimer.

The enzyme catalyses (6R)-5,10-methylene-5,6,7,8-tetrahydrofolate + NADP(+) = (6R)-5,10-methenyltetrahydrofolate + NADPH. It carries out the reaction (6R)-5,10-methenyltetrahydrofolate + H2O = (6R)-10-formyltetrahydrofolate + H(+). It functions in the pathway one-carbon metabolism; tetrahydrofolate interconversion. In terms of biological role, catalyzes the oxidation of 5,10-methylenetetrahydrofolate to 5,10-methenyltetrahydrofolate and then the hydrolysis of 5,10-methenyltetrahydrofolate to 10-formyltetrahydrofolate. This Bacillus licheniformis (strain ATCC 14580 / DSM 13 / JCM 2505 / CCUG 7422 / NBRC 12200 / NCIMB 9375 / NCTC 10341 / NRRL NRS-1264 / Gibson 46) protein is Bifunctional protein FolD.